The chain runs to 128 residues: Small ribosomal subunit protein uS14m (128 aa).

It belongs to the universal ribosomal protein uS14 family. In terms of assembly, component of the mitochondrial ribosome small subunit (28S) which comprises a 12S rRNA and about 30 distinct proteins. Interacts with LIAT1.

The protein resides in the mitochondrion. The polypeptide is Small ribosomal subunit protein uS14m (MRPS14) (Bos taurus (Bovine)).